Here is a 160-residue protein sequence, read N- to C-terminus: Crossover junction endodeoxyribonuclease RuvC (160 aa).

Residues aspartate 9, glutamate 68, and aspartate 141 contribute to the active site. Mg(2+)-binding residues include aspartate 9, glutamate 68, and aspartate 141.

The protein belongs to the RuvC family. As to quaternary structure, homodimer which binds Holliday junction (HJ) DNA. The HJ becomes 2-fold symmetrical on binding to RuvC with unstacked arms; it has a different conformation from HJ DNA in complex with RuvA. In the full resolvosome a probable DNA-RuvA(4)-RuvB(12)-RuvC(2) complex forms which resolves the HJ. Requires Mg(2+) as cofactor.

It is found in the cytoplasm. It catalyses the reaction Endonucleolytic cleavage at a junction such as a reciprocal single-stranded crossover between two homologous DNA duplexes (Holliday junction).. In terms of biological role, the RuvA-RuvB-RuvC complex processes Holliday junction (HJ) DNA during genetic recombination and DNA repair. Endonuclease that resolves HJ intermediates. Cleaves cruciform DNA by making single-stranded nicks across the HJ at symmetrical positions within the homologous arms, yielding a 5'-phosphate and a 3'-hydroxyl group; requires a central core of homology in the junction. The consensus cleavage sequence is 5'-(A/T)TT(C/G)-3'. Cleavage occurs on the 3'-side of the TT dinucleotide at the point of strand exchange. HJ branch migration catalyzed by RuvA-RuvB allows RuvC to scan DNA until it finds its consensus sequence, where it cleaves and resolves the cruciform DNA. This Campylobacter jejuni subsp. jejuni serotype O:23/36 (strain 81-176) protein is Crossover junction endodeoxyribonuclease RuvC.